The primary structure comprises 1915 residues: MKFKKELINILALIFVLKKNIFAQSICPTGYQMTQGSCTAIQCPNGQYYDSNLGLCANCDQACSACNYYPTYCTQCQNGFYLYQNQCLTQCPQAQTYVSCSGSSCICQACDSSCTQCFGNKNTQCLACSVGFYYNQINSSCLKQCEDGYTQQIVNIGASQQLLCIPCDNNCRTCSQTNAQQCLTCKDNMYLNTATNQCVSTCPQLQYKINGICKICPTGCQTCYNTNPSNPSTVESCLSCVSGYFLDIENQLCVKNCVSGYVVDAATQRCLPCNATCKNCSDQTNQGCLQCQNGYSLTSGSPSSCQNNCPNGNYQNSSLCLSCNTACSECFGADNQQCTACKTGYYLYKTQCLVICPVGFYTFARQYADPLKQPICDYCPNEMEQCEQDKSNFDLIKPILCKRGYYLYNGTCVKTCPDQTYYQDEATRSCLPCVFPCQTCLSASVCLTCATYTPNGQVQGQTYIFAQITYNGPQGTVFQQNCVPACPKGFYQNSKNNSCQVCNQQCQTCQGPAQTDCITCQIYDSNNMLFKYNNQCYYTCPSSQNNPMYGDKTTQACLPCSQECSSCFNGNNKSCYSCMNGYFLEYLKPECKSFCASDGTYMNSSTNQCSLCGFGCSSCTNGTFNSCISCLNGYYLQQNYNVCYPCPQQCASCTDMNTCQSCNQGYFLYSQTNSCVQQCPLIGFYVDTTQQACIPCDASCLECYGGANNQCISCPKGSYLKTDGTCQQCSQCSSNNECLGPNITDCLNQPICKPGQYLYDGQCLTCFPYCSTCSGTTYDSCISCQTTTDYTLLFDVCKKKVSQTDTQCDIGFYYDSVNKQCYSCHQNCIQCFGKSSSQCTKCSSGYLLHLDITTCSSTCLDGYYQQDPSIPQCSPCLYNCINGCSSGYQFLLGLCFTQCPFGTTAQKENCSFNSKPSIQFAQNLGNSVNNNSQTISLQLLVYSKNLFSIKWRLFTGNTDISNGPIQSYIQNRFDYIVFPPKSLQSNTQYTIQASILDLANNCQNENDCMVQQTFQTMNAITKGNFNIEINSAYLQLTLIISGWLFNSVPDNISFDLYVKLTGNDYFFFDKGQNYQDGRFTYLIPNLSYDLQDNKAQFFLVIYNDFDVQIQQLLIALNLNLQQTTISIDEFLDSVYSKITTLQQIQSLSYQFYSQMQNLMSSQTTSQTIFNRHLFYQVYSSLKGVQIPCDSNINCSGNGKCLWSQDNYNEILCICNINYAGRYCEFQSYQLDIARQHLIALTDLISNIPLNKSSDLFFTIEVLLELTYFYSIFDEFTLNTLINVYFQVFNQLQRVQSNISDEKILFKISKLTSQLINLINEDQTLSYNDQQSLLMKTMNDFDSQINLYLQNFAKSFDDLKSQEQVQTSFQTDISNINLNLIYQNDLLDAFMSNNGASDGQQQTPIVFYGDQISYTFDITQFSPKSSLSTAVIKWNSNPFLSQSQYQAPFISCITELVIYSQQTEIQISTVSQIVEIAIPKILPTPILSVIRPFYQPYTCIYFDSVSQVYKQDGVQYLRENSTHVICGSEQISGNYGVIVNQEYIDPNLSLTVIWNATQQIYANDQQFINFINQLINSNNNNGTNENPQVSQSSFNPNLSLLYALLIYIIFITIFIVISIIRDRKDQETYIKESDSYWLVHPIYSLIFGPYSSFFPRLQRSINYAQLIINLFLYNAIFVLVYSLPSEQELQQNVGKRQIISIQISSTSVACSIVTYYLTICMVNLFKMKWYIKQKWLDFKQDKITTEIVEQVTKSLKIFHLMNYGLVFMLQAGMGIPIIILILSFNSQQNQFFFTSVFASFVIDNILDIIILISFCFIKIFSQSEKSKIILLFTLRGFYYPVYEFLDIEDKIKEYQQKGEVLPAEEANNQSDDEDIFEINDHMNTPKRIFKKNEEKIDKAQEEIQLNEFVNNLKTNQ.

Positions 1–23 (MKFKKELINILALIFVLKKNIFA) are cleaved as a signal peptide. FU repeat units follow at residues 53 to 98 (LGLC…QTYV), 104 to 151 (SCIC…GYTQ), 161 to 208 (QLLC…LQYK), 210 to 263 (NGIC…GYVV), and 267 to 315 (TQRC…GNYQ). A glycan (N-linked (GlcNAc...) asparagine) is linked at N138. 3 N-linked (GlcNAc...) asparagine glycosylation sites follow: N274, N279, and N316. FU repeat units lie at residues 317-362 (SSLC…GFYT), 373-422 (QPIC…QTYY), 427-492 (TRSC…GFYQ), 496-546 (NNSC…SQNN), and 554-602 (TQAC…GTYM). N409 is a glycosylation site (N-linked (GlcNAc...) asparagine). 4 N-linked (GlcNAc...) asparagine glycosylation sites follow: N496, N572, N603, and N621. 3 FU repeats span residues 606–639 (TNQC…LQQN), 640–686 (YNVC…GFYV), and 690–739 (QQAC…NECL). N742 carries an N-linked (GlcNAc...) asparagine glycan. FU repeat units follow at residues 760-814 (DGQC…GFYY) and 818-865 (NKQC…GYYQ). N-linked (GlcNAc...) asparagine glycosylation is found at N909, N930, N1051, N1085, and N1193. In terms of domain architecture, EGF-like spans 1184–1224 (VQIPCDSNINCSGNGKCLWSQDNYNEILCICNINYAGRYCE). Cystine bridges form between C1188/C1200, C1194/C1212, and C1214/C1223. N1250, N1297, N1519, N1546, N1554, N1580, and N1596 each carry an N-linked (GlcNAc...) asparagine glycan. A run of 5 helical transmembrane segments spans residues 1599–1619 (LLYA…ISII), 1662–1682 (YAQL…VYSL), 1704–1724 (STSV…VNLF), 1763–1783 (GLVF…ILSF), and 1796–1816 (FASF…FCFI). N1867 carries an N-linked (GlcNAc...) asparagine glycan.

The protein localises to the membrane. Its function is as follows. Required for mucocyst secretion. The chain is Cysteine repeat modular protein 2 from Tetrahymena thermophila (strain SB210).